The primary structure comprises 330 residues: Malate dehydrogenase (330 aa).

12 to 18 contributes to the NAD(+) binding site; that stretch reads GAAGQIG. Residues arginine 93 and arginine 99 each contribute to the substrate site. NAD(+)-binding positions include asparagine 106, glutamine 113, and 130–132; that span reads VGN. 2 residues coordinate substrate: asparagine 132 and arginine 166. The active-site Proton acceptor is the histidine 191.

This sequence belongs to the LDH/MDH superfamily. MDH type 2 family.

It carries out the reaction (S)-malate + NAD(+) = oxaloacetate + NADH + H(+). In terms of biological role, catalyzes the reversible oxidation of malate to oxaloacetate. The protein is Malate dehydrogenase of Azoarcus sp. (strain BH72).